A 288-amino-acid polypeptide reads, in one-letter code: Rhox homeobox family member 2 (288 aa).

A disordered region spans residues 16–136 (SPAVDDEKEL…GLEPGNAQQP (121 aa)). The segment covering 39–48 (VKEEEEDAQP) has biased composition (acidic residues). Over residues 68 to 80 (GEEKDGGGEEKDG) the composition is skewed to basic and acidic residues. Positions 134–193 (QQPNVHAFTPLQLQELERIFQREQFPSEFLRRRLARSMNVTELAVQIWFENRRAKWRRHQ) form a DNA-binding region, homeobox. The Nuclear localization signal motif lies at 186-195 (RAKWRRHQRA).

Belongs to the paired-like homeobox family. PEPP subfamily. In terms of tissue distribution, testis. Not detected in epididymis nor placenta. In testis, mainly expressed in germ cells, but also detected in somatic cells such as Sertoli cells, Leydig cells and peritubular cells.

Its subcellular location is the nucleus. Functionally, transcription factor maybe involved in reproductive processes. Modulates expression of target genes encoding proteins involved in processes relevant to spermatogenesis. The sequence is that of Rhox homeobox family member 2 from Homo sapiens (Human).